Here is a 601-residue protein sequence, read N- to C-terminus: Elongation factor 4 (601 aa).

The tr-type G domain occupies 6 to 188 (NYIRNFSIVA…AIVTQLPSPR (183 aa)). GTP is bound by residues 18-23 (DHGKST) and 135-138 (NKVD).

Belongs to the TRAFAC class translation factor GTPase superfamily. Classic translation factor GTPase family. LepA subfamily.

Its subcellular location is the cell inner membrane. It carries out the reaction GTP + H2O = GDP + phosphate + H(+). In terms of biological role, required for accurate and efficient protein synthesis under certain stress conditions. May act as a fidelity factor of the translation reaction, by catalyzing a one-codon backward translocation of tRNAs on improperly translocated ribosomes. Back-translocation proceeds from a post-translocation (POST) complex to a pre-translocation (PRE) complex, thus giving elongation factor G a second chance to translocate the tRNAs correctly. Binds to ribosomes in a GTP-dependent manner. In Bartonella henselae (strain ATCC 49882 / DSM 28221 / CCUG 30454 / Houston 1) (Rochalimaea henselae), this protein is Elongation factor 4.